The sequence spans 620 residues: Protein VERNALIZATION INSENSITIVE 3 (620 aa).

The PHD-type zinc finger occupies 148–206 (RCSCCICQKFDDNKDPSLWLTCDACGSSCHLECGLKQDRYGIGSDDLDGRFYCAYCGKD). A Nuclear localization signal motif is present at residues 213-220 (WRKQVKVA). The Fibronectin type-III domain maps to 314 to 412 (DKMTVRVEEI…ELRFTTLKDD (99 aa)). Positions 411–466 (DDGDEAGDQQSPLTNSSSGLCSNPSLPEDESNNVNKSCSKGNGDKDNTEHCSAGEV) are disordered. Polar residues predominate over residues 418-435 (DQQSPLTNSSSGLCSNPS). Residues 493 to 500 (CKRDIYKG) carry the Nuclear localization signal motif. The VIN3-Interacting Domain (VID) stretch occupies residues 512 to 620 (TVSLNEKPEI…PAGICLKLWH (109 aa)).

Interacts with VIL1 and VIL2. The heterodimer made of VIN3 and VIL1 is required for establishing the vernalization-induced epigenetic silencing of FLC. Component of the plant homeodomain / polycomb repressive complex 2 (PHD-PRC2) large complex during prolonged cold, composed of core PRC2 components (VRN2, EZA1, FIE and MSI1), and three related PHD finger proteins (VIL1, VIL2 and VIN3) that mediates histone H3 trimethylation on 'Lys-27' (H3K27me3). In terms of tissue distribution, expressed in shoot and root apices. Displays the same pattern of expression as FLC.

The protein resides in the nucleus. It localises to the nucleus speckle. Plays a central role in vernalization by mediating the initial transcriptional repression of the homeotic gene FLC, a floral repressor, after a cold treatment. However, due to its transient expression, it cannot maintain repression of FLC, which is then maintained by Polycomb Group complexes containing VRN2 throughout development. Required to deacetylate histones on the FLC promoter. Together with VIL1, required during vernalization for the modifications of FLC and FLM chromatin that are associated with an epigenetically silenced state (e.g. chromatin modifications, histone deacetylation, and trimethylated H3 'Lys-4' H3K4me3 and 'Lys-27' H3K27me3) and with acquisition of competence to flower. This is Protein VERNALIZATION INSENSITIVE 3 (VIN3) from Arabidopsis thaliana (Mouse-ear cress).